We begin with the raw amino-acid sequence, 182 residues long: Adenine phosphoribosyltransferase (182 aa).

Belongs to the purine/pyrimidine phosphoribosyltransferase family. Homodimer.

The protein resides in the cytoplasm. The catalysed reaction is AMP + diphosphate = 5-phospho-alpha-D-ribose 1-diphosphate + adenine. It participates in purine metabolism; AMP biosynthesis via salvage pathway; AMP from adenine: step 1/1. Its function is as follows. Catalyzes a salvage reaction resulting in the formation of AMP, that is energically less costly than de novo synthesis. The chain is Adenine phosphoribosyltransferase from Pseudomonas entomophila (strain L48).